We begin with the raw amino-acid sequence, 219 residues long: Small ribosomal subunit protein uS3 (219 aa).

The region spanning Ile-38 to Lys-107 is the KH type-2 domain.

The protein belongs to the universal ribosomal protein uS3 family. As to quaternary structure, part of the 30S ribosomal subunit. Forms a tight complex with proteins S10 and S14.

Functionally, binds the lower part of the 30S subunit head. Binds mRNA in the 70S ribosome, positioning it for translation. The sequence is that of Small ribosomal subunit protein uS3 from Exiguobacterium sp. (strain ATCC BAA-1283 / AT1b).